Reading from the N-terminus, the 633-residue chain is Extracellular metalloproteinase 5 (633 aa).

A signal peptide spans 1 to 21 (MHGLLLAAAGLLSLPLHVIAH). A propeptide spanning residues 22-245 (PQPSTNLAGR…HNVVDYVSHA (224 aa)) is cleaved from the precursor. N-linked (GlcNAc...) asparagine glycosylation occurs at asparagine 286. Histidine 428 provides a ligand contact to Zn(2+). Glutamate 429 is a catalytic residue. A Zn(2+)-binding site is contributed by histidine 432. N-linked (GlcNAc...) asparagine glycosylation is found at asparagine 592 and asparagine 621.

Belongs to the peptidase M36 family. The cofactor is Zn(2+).

It is found in the secreted. In terms of biological role, secreted metalloproteinase probably acting as a virulence factor. This Arthroderma benhamiae (Trichophyton mentagrophytes) protein is Extracellular metalloproteinase 5 (MEP5).